Consider the following 413-residue polypeptide: Multifunctional CCA protein (413 aa).

Glycine 8 and arginine 11 together coordinate ATP. CTP is bound by residues glycine 8 and arginine 11. Aspartate 21 and aspartate 23 together coordinate Mg(2+). Residues arginine 91, arginine 137, and arginine 140 each contribute to the ATP site. 3 residues coordinate CTP: arginine 91, arginine 137, and arginine 140. The HD domain maps to 228-329 (TGIHTLMVLA…IKIFDKADLW (102 aa)).

The protein belongs to the tRNA nucleotidyltransferase/poly(A) polymerase family. Bacterial CCA-adding enzyme type 1 subfamily. As to quaternary structure, monomer. Can also form homodimers and oligomers. The cofactor is Mg(2+). Requires Ni(2+) as cofactor.

It carries out the reaction a tRNA precursor + 2 CTP + ATP = a tRNA with a 3' CCA end + 3 diphosphate. The enzyme catalyses a tRNA with a 3' CCA end + 2 CTP + ATP = a tRNA with a 3' CCACCA end + 3 diphosphate. Functionally, catalyzes the addition and repair of the essential 3'-terminal CCA sequence in tRNAs without using a nucleic acid template. Adds these three nucleotides in the order of C, C, and A to the tRNA nucleotide-73, using CTP and ATP as substrates and producing inorganic pyrophosphate. tRNA 3'-terminal CCA addition is required both for tRNA processing and repair. Also involved in tRNA surveillance by mediating tandem CCA addition to generate a CCACCA at the 3' terminus of unstable tRNAs. While stable tRNAs receive only 3'-terminal CCA, unstable tRNAs are marked with CCACCA and rapidly degraded. This is Multifunctional CCA protein from Shewanella woodyi (strain ATCC 51908 / MS32).